We begin with the raw amino-acid sequence, 159 residues long: Ribosomal RNA large subunit methyltransferase H (159 aa).

S-adenosyl-L-methionine contacts are provided by residues glycine 108 and 127–132 (FGKLTM).

This sequence belongs to the RNA methyltransferase RlmH family. In terms of assembly, homodimer.

It localises to the cytoplasm. It carries out the reaction pseudouridine(1915) in 23S rRNA + S-adenosyl-L-methionine = N(3)-methylpseudouridine(1915) in 23S rRNA + S-adenosyl-L-homocysteine + H(+). In terms of biological role, specifically methylates the pseudouridine at position 1915 (m3Psi1915) in 23S rRNA. The protein is Ribosomal RNA large subunit methyltransferase H of Lactobacillus acidophilus (strain ATCC 700396 / NCK56 / N2 / NCFM).